The primary structure comprises 586 residues: Mitochondrial tRNA methylthiotransferase CDK5RAP1 (586 aa).

The N-terminal 30 residues, 1 to 30 (MHPLQRVFRAQRLSAPLTSMCWVLLRTFRA), are a transit peptide targeting the mitochondrion. The tract at residues 68–90 (ASVPQEKPSSPEVEDPPPYLSGD) is disordered. Positions 97–217 (RKVYLETYGC…LPRLLAVVES (121 aa)) constitute an MTTase N-terminal domain. [4Fe-4S] cluster-binding residues include Cys-106, Cys-142, Cys-180, Cys-255, Cys-259, and Cys-262. The Radical SAM core domain maps to 241–495 (SPSATSAFVS…ITVFREEASK (255 aa)). The TRAM domain maps to 498–573 (ATSVGCTQLV…SQTLKGHILC (76 aa)).

It belongs to the methylthiotransferase family. MiaB subfamily. In terms of assembly, interacts with CDK5R1 (p35 form). CDK5RAP1, CDK5RAP2 and CDK5RAP3 show competitive binding to CDK5R1. Forms a complex with CDK5R1 and CDK5. [4Fe-4S] cluster serves as cofactor. In terms of tissue distribution, expressed in brain.

Its subcellular location is the mitochondrion inner membrane. It carries out the reaction N(6)-dimethylallyladenosine(37) in tRNA + (sulfur carrier)-SH + AH2 + 2 S-adenosyl-L-methionine = 2-methylsulfanyl-N(6)-dimethylallyladenosine(37) in tRNA + (sulfur carrier)-H + 5'-deoxyadenosine + L-methionine + A + S-adenosyl-L-homocysteine + 2 H(+). Methylthiotransferase that catalyzes the conversion of N6-(dimethylallyl)adenosine (i(6)A) to 2-methylthio-N6-(dimethylallyl)adenosine (ms(2)i(6)A) at position 37 (adjacent to the 3'-end of the anticodon) of four mitochondrial DNA-encoded tRNAs (Ser(UCN), Phe, Tyr and Trp). Essential for efficient and highly accurate protein translation by the ribosome. Specifically inhibits CDK5 activation by CDK5R1. Essential for efficient mitochondrial protein synthesis and respiratory chain. The protein is Mitochondrial tRNA methylthiotransferase CDK5RAP1 (Cdk5rap1) of Rattus norvegicus (Rat).